The primary structure comprises 386 residues: L-lactate dehydrogenase (386 aa).

In terms of domain architecture, FMN hydroxy acid dehydrogenase spans 1–380; it reads MIISAASDYR…SGDALSRVTR (380 aa). Position 24 (tyrosine 24) interacts with substrate. Residues serine 106 and glutamine 127 each contribute to the FMN site. A substrate-binding site is contributed by tyrosine 129. Threonine 155 serves as a coordination point for FMN. Position 164 (arginine 164) interacts with substrate. Lysine 251 lines the FMN pocket. Histidine 275 functions as the Proton acceptor in the catalytic mechanism. Arginine 278 contributes to the substrate binding site. 306-330 is a binding site for FMN; it reads DSGIRSGLDVVRMLALGADAVLLGR.

This sequence belongs to the FMN-dependent alpha-hydroxy acid dehydrogenase family. It depends on FMN as a cofactor.

Its subcellular location is the cell inner membrane. The catalysed reaction is (S)-lactate + A = pyruvate + AH2. Its function is as follows. Catalyzes the conversion of L-lactate to pyruvate. Is coupled to the respiratory chain. The sequence is that of L-lactate dehydrogenase from Xanthomonas campestris pv. campestris (strain 8004).